The following is a 1172-amino-acid chain: NACHT, LRR and PYD domains-containing protein 1b allele 3 (1172 aa).

The tract at residues 1 to 22 (MEESPPKQKSNTKVAQHEGQQD) is disordered. Positions 126-435 (QLVIIEGAAG…EFFAAISCIL (310 aa)) constitute an NACHT domain. Residue 132 to 139 (GAAGIGKS) participates in ATP binding. 2 LRR repeats span residues 627–647 (NLEGLDLSGNSLRYSVVQSLC) and 684–704 (SLTELYLQLNDLGDDGVRMLC). The tract at residues 789 to 922 (FWGPTGPVAT…GYTVLKNPSF (134 aa)) is ZU5. The region spanning 789–1072 (FWGPTGPVAT…LRPALPRIAQ (284 aa)) is the FIIND domain. Positions 923–1072 (SPMGDVLRII…LRPALPRIAQ (150 aa)) are UPA. In terms of domain architecture, CARD spans 1082-1165 (HFMDQHREQL…HLVMDLLEKS (84 aa)).

It belongs to the NLRP family. In terms of processing, in contrast to allele 1 and 2, not able to mediate autocatalytic cleavage. As to expression, expressed in macrophages.

It localises to the cytoplasm. The protein resides in the cytosol. With respect to regulation, in contrast to allele 1, does not undergo autocatalytic cleavage within the FIIND domain and its mode of activation remains unclear. In contrast to alleles 1 and 2, allele 3 is not activated by Val-boroPro (Talabostat, PT-100). Not activated by cleavage by B.anthracis lethal toxin (LT) endopeptidase. Not activated by metabolic inhibitors, such as 2-deoxy-D-glucose and sodium azide. Its function is as follows. May act as the sensor component of the Nlrp1b inflammasome, which mediates inflammasome activation in response to various pathogen-associated signals, leading to subsequent pyroptosis. Inflammasomes are supramolecular complexes that assemble in the cytosol in response to pathogens and other damage-associated signals and play critical roles in innate immunity and inflammation. May act as a recognition receptor (PRR), which recognizes specific pathogens and other damage-associated signals and forms an inflammasome complex: the inflammasome directly recruits pro-caspase-1 (proCASP1) independently of PYCARD/ASC and promotes caspase-1 (CASP1) activation, which subsequently cleaves and activates inflammatory cytokines IL1B and IL18 and gasdermin-D (GSDMD), leading to pyroptosis. In the absence of GSDMD expression, the Nlrp1b inflammasome is able to recruit and activate CASP8, leading to activation of gasdermin-E (GSDME). Contrary to Nlrp1b allele 1, allele 3 is not activated by Bacillus anthracis lethal toxin. The absence of autocatalytic cleavage within the FIIND domain, which regulates activation in other alleles, suggests that allele 3 may be non-functional. The chain is NACHT, LRR and PYD domains-containing protein 1b allele 3 from Mus musculus (Mouse).